Reading from the N-terminus, the 179-residue chain is Large ribosomal subunit protein uL5 (179 aa).

This sequence belongs to the universal ribosomal protein uL5 family. As to quaternary structure, part of the 50S ribosomal subunit; part of the 5S rRNA/L5/L18/L25 subcomplex. Contacts the 5S rRNA and the P site tRNA. Forms a bridge to the 30S subunit in the 70S ribosome.

In terms of biological role, this is one of the proteins that bind and probably mediate the attachment of the 5S RNA into the large ribosomal subunit, where it forms part of the central protuberance. In the 70S ribosome it contacts protein S13 of the 30S subunit (bridge B1b), connecting the 2 subunits; this bridge is implicated in subunit movement. Contacts the P site tRNA; the 5S rRNA and some of its associated proteins might help stabilize positioning of ribosome-bound tRNAs. The protein is Large ribosomal subunit protein uL5 of Delftia acidovorans (strain DSM 14801 / SPH-1).